The following is a 293-amino-acid chain: Methoxy mycolic acid synthase MmaA3 (293 aa).

S-adenosyl-L-methionine contacts are provided by residues 39-40 (YS), 78-80 (GCG), 100-105 (TLSKNQ), 129-130 (WA), and Ile142. The active site involves Cys275.

This sequence belongs to the CFA/CMAS family.

It functions in the pathway lipid metabolism; mycolic acid biosynthesis. In terms of biological role, involved in the biosynthesis of methoxymycolic acid. It catalyzes the O-methylation of the hydroxy group of the hydroxymycolate to form a methyl ether. In Mycobacterium bovis (strain ATCC BAA-935 / AF2122/97), this protein is Methoxy mycolic acid synthase MmaA3 (cmaB).